The following is a 401-amino-acid chain: Succinyl-diaminopimelate desuccinylase (401 aa).

His71 serves as a coordination point for Zn(2+). Residue Asp73 is part of the active site. Position 104 (Asp104) interacts with Zn(2+). Glu138 functions as the Proton acceptor in the catalytic mechanism. Residues Glu139, Glu167, and His352 each coordinate Zn(2+).

It belongs to the peptidase M20A family. DapE subfamily. Homodimer. Zn(2+) is required as a cofactor. It depends on Co(2+) as a cofactor.

The enzyme catalyses N-succinyl-(2S,6S)-2,6-diaminopimelate + H2O = (2S,6S)-2,6-diaminopimelate + succinate. It participates in amino-acid biosynthesis; L-lysine biosynthesis via DAP pathway; LL-2,6-diaminopimelate from (S)-tetrahydrodipicolinate (succinylase route): step 3/3. Its function is as follows. Catalyzes the hydrolysis of N-succinyl-L,L-diaminopimelic acid (SDAP), forming succinate and LL-2,6-diaminopimelate (DAP), an intermediate involved in the bacterial biosynthesis of lysine and meso-diaminopimelic acid, an essential component of bacterial cell walls. The protein is Succinyl-diaminopimelate desuccinylase of Wolbachia sp. subsp. Brugia malayi (strain TRS).